We begin with the raw amino-acid sequence, 169 residues long: EP300-interacting inhibitor of differentiation 1 (169 aa).

The interval 31–50 (GRGARGPAPEEGPMEEEAGP) is disordered. Residues 54–120 (RAQRGLFPEA…AGDALDGGFQ (67 aa)) are interaction with NR0B2. The LXCXE motif motif lies at 150–154 (LGCDE).

Interacts via its LXCXE motif with the entire pocket region of RB1. Interacts with EP300, NR0B2 and TRIM27. As to expression, expressed in all adult tissues examined and during embryogenesis.

The protein resides in the nucleus. It is found in the cytoplasm. Functionally, interacts with RB1 and EP300 and acts as a repressor of MYOD1 transactivation. Inhibits EP300 and CBP histone acetyltransferase activity. May be involved in coupling cell cycle exit to the transcriptional activation of genes required for cellular differentiation. May act as a candidate coinhibitory factor for NR0B2 that can be directly linked to transcription inhibitory mechanisms. The chain is EP300-interacting inhibitor of differentiation 1 from Mus musculus (Mouse).